Reading from the N-terminus, the 209-residue chain is MICOS complex subunit mic19 (209 aa).

2 coiled-coil regions span residues 48-86 (LELE…DTGS) and 127-156 (EVAA…GRKK).

Belongs to the MICOS complex subunit Mic19 family. As to quaternary structure, component of the mitochondrial contact site and cristae organizing system (MICOS) complex.

Its subcellular location is the mitochondrion inner membrane. In terms of biological role, component of the MICOS complex, a large protein complex of the mitochondrial inner membrane that plays crucial roles in the maintenance of crista junctions, inner membrane architecture, and formation of contact sites to the outer membrane. Involved in osmoadaptation. This chain is MICOS complex subunit mic19, found in Emericella nidulans (strain FGSC A4 / ATCC 38163 / CBS 112.46 / NRRL 194 / M139) (Aspergillus nidulans).